A 90-amino-acid chain; its full sequence is Cluster 41 protein AFLA_114800 (90 aa).

A helical transmembrane segment spans residues G55 to V77. A glycan (N-linked (GlcNAc...) asparagine) is linked at N80.

It is found in the membrane. Functionally, cluster 41 protein; part of the gene cluster 41 that mediates the biosynthesis of an extracellular and diffusible metabolite that is able to stimulate colony sclerotial production. The protein is Cluster 41 protein AFLA_114800 of Aspergillus flavus (strain ATCC 200026 / FGSC A1120 / IAM 13836 / NRRL 3357 / JCM 12722 / SRRC 167).